The following is a 434-amino-acid chain: Adenylosuccinate synthetase (434 aa).

Residues 14–20 (GDEGKGK) and 42–44 (GHE) contribute to the GTP site. Asp-15 acts as the Proton acceptor in catalysis. Mg(2+) is bound by residues Asp-15 and Gly-42. Residues 15–18 (DEGK), 40–43 (NSGH), Thr-133, Arg-147, Asn-229, Thr-244, and Arg-308 each bind IMP. His-43 serves as the catalytic Proton donor. Substrate is bound at residue 304-310 (VTTGRVR). Residues Arg-310, 336-338 (KLD), and 422-424 (GTG) contribute to the GTP site.

It belongs to the adenylosuccinate synthetase family. As to quaternary structure, homodimer. It depends on Mg(2+) as a cofactor.

It is found in the cytoplasm. The catalysed reaction is IMP + L-aspartate + GTP = N(6)-(1,2-dicarboxyethyl)-AMP + GDP + phosphate + 2 H(+). It participates in purine metabolism; AMP biosynthesis via de novo pathway; AMP from IMP: step 1/2. Its function is as follows. Plays an important role in the salvage pathway for purine nucleotide biosynthesis. Catalyzes the first committed step in the biosynthesis of AMP from IMP. The chain is Adenylosuccinate synthetase from Theileria parva (East coast fever infection agent).